Here is a 163-residue protein sequence, read N- to C-terminus: Phosphopantetheine adenylyltransferase (163 aa).

S9 is a binding site for substrate. ATP-binding positions include 9–10 (SF) and H17. Substrate contacts are provided by K41, V78, and R92. ATP contacts are provided by residues 93-95 (GLR), E103, and 128-134 (SRPITAT).

This sequence belongs to the bacterial CoaD family. In terms of assembly, homohexamer. Requires Mg(2+) as cofactor.

The protein localises to the cytoplasm. The enzyme catalyses (R)-4'-phosphopantetheine + ATP + H(+) = 3'-dephospho-CoA + diphosphate. The protein operates within cofactor biosynthesis; coenzyme A biosynthesis; CoA from (R)-pantothenate: step 4/5. Functionally, reversibly transfers an adenylyl group from ATP to 4'-phosphopantetheine, yielding dephospho-CoA (dPCoA) and pyrophosphate. The sequence is that of Phosphopantetheine adenylyltransferase from Rhizobium meliloti (strain 1021) (Ensifer meliloti).